Here is a 258-residue protein sequence, read N- to C-terminus: Venom plasminogen activator GPV-PA (258 aa).

The first 18 residues, 1-18 (MVLIRVLANLLILQLSYA), serve as a signal peptide directing secretion. Positions 19–24 (QKSSEL) are excised as a propeptide. In terms of domain architecture, Peptidase S1 spans 25 to 249 (VFGGRPCNIN…YTDWIQSIIA (225 aa)). 6 disulfides stabilise this stretch: Cys31–Cys163, Cys50–Cys66, Cys98–Cys256, Cys142–Cys210, Cys174–Cys189, and Cys200–Cys225. An N-linked (GlcNAc...) asparagine glycan is attached at Asn44. Residues His65 and Asp110 each act as charge relay system in the active site. Asn121 and Asn185 each carry an N-linked (GlcNAc...) asparagine glycan. The active-site Charge relay system is Ser204.

The protein belongs to the peptidase S1 family. Snake venom subfamily. As to quaternary structure, monomer. Expressed by the venom gland.

Its subcellular location is the secreted. Functionally, snake venom serine protease that activates plasminogen. The chain is Venom plasminogen activator GPV-PA from Trimeresurus albolabris (White-lipped pit viper).